The sequence spans 1241 residues: ATP-dependent helicase/nuclease subunit A (1241 aa).

The region spanning 12 to 485 (SQWTDDQWKA…IDLAKNFRSR (474 aa)) is the UvrD-like helicase ATP-binding domain. 33 to 40 (AAAGSGKT) is a binding site for ATP. Positions 505–805 (GEIDYDADAE…RIMTIHKSKG (301 aa)) constitute a UvrD-like helicase C-terminal domain.

Belongs to the helicase family. AddA subfamily. As to quaternary structure, heterodimer of AddA and AddB/RexB. Mg(2+) is required as a cofactor.

It carries out the reaction Couples ATP hydrolysis with the unwinding of duplex DNA by translocating in the 3'-5' direction.. It catalyses the reaction ATP + H2O = ADP + phosphate + H(+). The heterodimer acts as both an ATP-dependent DNA helicase and an ATP-dependent, dual-direction single-stranded exonuclease. Recognizes the chi site generating a DNA molecule suitable for the initiation of homologous recombination. The AddA nuclease domain is required for chi fragment generation; this subunit has the helicase and 3' -&gt; 5' nuclease activities. In Bacillus thuringiensis (strain Al Hakam), this protein is ATP-dependent helicase/nuclease subunit A.